Here is a 457-residue protein sequence, read N- to C-terminus: UPF0328 protein ECU05_0030 (457 aa).

Disordered stretches follow at residues Met-1 to Thr-112 and Val-157 to Ile-183. The span at His-74 to Thr-94 shows a compositional bias: basic and acidic residues. The span at Cys-102–Thr-112 shows a compositional bias: pro residues.

This sequence belongs to the UPF0328 family.

This Encephalitozoon cuniculi (strain GB-M1) (Microsporidian parasite) protein is UPF0328 protein ECU05_0030.